The chain runs to 881 residues: Serine/threonine-protein phosphatase BSL1 (881 aa).

3 Kelch repeats span residues 60-109, 269-320, and 338-385; these read GSSS…AVGT, RLHV…DQDP, and RIYV…PRFS. Disordered regions lie at residues 368 to 407 and 436 to 464; these read SPLL…LSLD and AGTL…ANEG. 2 stretches are compositionally biased toward polar residues: residues 374–383 and 445–460; these read DRTQQSSTPR and TSDA…TDGT. Ser491 bears the Phosphoserine mark. Positions 503–522 are disordered; it reads VPMNNSDVPQPTKKFTRQKS. The Mn(2+) site is built by Asp584, His586, Asp618, and Asn650. Catalysis depends on His651, which acts as the Proton donor. Mn(2+)-binding residues include His703 and His782. The segment at 837-881 is disordered; that stretch reads ILSPENSPEHSGDDAWMQELNIQRPPTPTRGRPQPDFDRSSLAYI. The residue at position 839 (Ser839) is a Phosphoserine.

This sequence belongs to the PPP phosphatase family. BSU subfamily. As to quaternary structure, interacts with CDG1 and CDL1. Mn(2+) is required as a cofactor. As to expression, expressed in mature cauline leaves and at the tip of influorescence, including flowers. Expressed at lower level in young tissues relative to older ones.

Its subcellular location is the nucleus. The catalysed reaction is O-phospho-L-seryl-[protein] + H2O = L-seryl-[protein] + phosphate. It carries out the reaction O-phospho-L-threonyl-[protein] + H2O = L-threonyl-[protein] + phosphate. In terms of biological role, phosphatase involved in elongation process, probably by acting as a regulator of brassinolide signaling. This is Serine/threonine-protein phosphatase BSL1 (BSL1) from Arabidopsis thaliana (Mouse-ear cress).